A 243-amino-acid polypeptide reads, in one-letter code: Probable fructoselysine utilization operon transcriptional repressor (243 aa).

In terms of domain architecture, HTH gntR-type spans 10-78 (QLLYATVRQR…QGKGTFVQSQ (69 aa)). The segment at residues 38–57 (ENELCTQYNVSRITIRKAIS) is a DNA-binding region (H-T-H motif).

Its pathway is carbohydrate metabolism; fructoselysine degradation [regulation]. May regulate the transcription of the frlABCDR operon, involved in the utilization of fructoselysine and psicoselysine. The chain is Probable fructoselysine utilization operon transcriptional repressor (frlR) from Escherichia coli O157:H7.